The primary structure comprises 327 residues: Embigin (327 aa).

A signal peptide spans 1–32 (MRALPGLLEARARTPRLLLLQCLLAAARPSSA). Residues 33–260 (DGSAPDSPFT…ELVVLSYLVP (228 aa)) are Extracellular-facing. Asparagine 54, asparagine 61, asparagine 75, asparagine 85, asparagine 100, asparagine 189, asparagine 196, asparagine 213, and asparagine 218 each carry an N-linked (GlcNAc...) asparagine glycan. Ig-like V-type domains are found at residues 71 to 158 (PVEK…NFKV) and 159 to 253 (PELH…IELV). Cystine bridges form between cysteine 88–cysteine 142 and cysteine 180–cysteine 237. The chain crosses the membrane as a helical span at residues 261–281 (LKPFLVIVAEVILLVATILLC). Over 282-327 (EKYTQKKKKHSDEGKEFEQIEQLKSDDSNGIENNVPRHRKNESLGQ) the chain is Cytoplasmic. The interval 287 to 327 (KKKKHSDEGKEFEQIEQLKSDDSNGIENNVPRHRKNESLGQ) is disordered. The segment covering 291–308 (HSDEGKEFEQIEQLKSDD) has biased composition (basic and acidic residues). A Phosphoserine modification is found at serine 309.

In terms of assembly, interacts with SLC16A1, SLC16A6 and SLC16A7.

The protein localises to the cell membrane. It is found in the synapse. In terms of biological role, plays a role in the outgrowth of motoneurons and in the formation of neuromuscular junctions. Following muscle denervation, promotes nerve terminal sprouting and the formation of additional acetylcholine receptor clusters at synaptic sites without affecting terminal Schwann cell number or morphology. Delays the retraction of terminal sprouts following re-innervation of denervated endplates. May play a role in targeting the monocarboxylate transporters SLC16A1, SLC16A6 and SLC16A7 to the cell membrane. The protein is Embigin (EMB) of Homo sapiens (Human).